The primary structure comprises 513 residues: Putative zinc finger CCCH domain-containing protein 51 (513 aa).

The disordered stretch occupies residues 155–180; it reads SMPRNSPNAGRNLVGHPHSSSKSSSK. Over residues 170-180 the composition is skewed to low complexity; sequence HPHSSSKSSSK. The segment at 176–204 adopts a C3H1-type zinc-finger fold; it reads KSSSKPCHFHFFRGYCKKGVNCQFFHGSV. The HTH OST-type domain occupies 218-299; it reads SLSKLDMEIR…HGQYHVVLVE (82 aa). Residues 325–411 enclose the RRM domain; the sequence is NQIYMTFPVH…SELRMTWLKS (87 aa).

The chain is Putative zinc finger CCCH domain-containing protein 51 from Oryza sativa subsp. japonica (Rice).